The following is a 218-amino-acid chain: GTP cyclohydrolase 1 (218 aa).

Zn(2+)-binding residues include cysteine 109, histidine 112, and cysteine 180.

This sequence belongs to the GTP cyclohydrolase I family. Toroid-shaped homodecamer, composed of two pentamers of five dimers.

It catalyses the reaction GTP + H2O = 7,8-dihydroneopterin 3'-triphosphate + formate + H(+). Its pathway is cofactor biosynthesis; 7,8-dihydroneopterin triphosphate biosynthesis; 7,8-dihydroneopterin triphosphate from GTP: step 1/1. This chain is GTP cyclohydrolase 1, found in Haemophilus influenzae (strain 86-028NP).